The following is a 394-amino-acid chain: Succinate--CoA ligase [ADP-forming] subunit beta 1 (394 aa).

The 229-residue stretch at 9–237 (RDLFAKHDVP…KAAANPLEAA (229 aa)) folds into the ATP-grasp domain. ATP-binding positions include Lys45, 52–54 (GRG), Glu92, Pro95, and Glu100. Mg(2+)-binding residues include Asn192 and Asp206. Substrate is bound by residues Asn257 and 319-321 (GIT).

The protein belongs to the succinate/malate CoA ligase beta subunit family. In terms of assembly, heterotetramer of two alpha and two beta subunits. The cofactor is Mg(2+).

It catalyses the reaction succinate + ATP + CoA = succinyl-CoA + ADP + phosphate. The catalysed reaction is GTP + succinate + CoA = succinyl-CoA + GDP + phosphate. It participates in carbohydrate metabolism; tricarboxylic acid cycle; succinate from succinyl-CoA (ligase route): step 1/1. Succinyl-CoA synthetase functions in the citric acid cycle (TCA), coupling the hydrolysis of succinyl-CoA to the synthesis of either ATP or GTP and thus represents the only step of substrate-level phosphorylation in the TCA. The beta subunit provides nucleotide specificity of the enzyme and binds the substrate succinate, while the binding sites for coenzyme A and phosphate are found in the alpha subunit. The chain is Succinate--CoA ligase [ADP-forming] subunit beta 1 from Streptomyces coelicolor (strain ATCC BAA-471 / A3(2) / M145).